The primary structure comprises 571 residues: Proline--tRNA ligase (571 aa).

It belongs to the class-II aminoacyl-tRNA synthetase family. ProS type 1 subfamily. Homodimer.

The protein resides in the cytoplasm. The catalysed reaction is tRNA(Pro) + L-proline + ATP = L-prolyl-tRNA(Pro) + AMP + diphosphate. Catalyzes the attachment of proline to tRNA(Pro) in a two-step reaction: proline is first activated by ATP to form Pro-AMP and then transferred to the acceptor end of tRNA(Pro). As ProRS can inadvertently accommodate and process non-cognate amino acids such as alanine and cysteine, to avoid such errors it has two additional distinct editing activities against alanine. One activity is designated as 'pretransfer' editing and involves the tRNA(Pro)-independent hydrolysis of activated Ala-AMP. The other activity is designated 'posttransfer' editing and involves deacylation of mischarged Ala-tRNA(Pro). The misacylated Cys-tRNA(Pro) is not edited by ProRS. In Aliivibrio salmonicida (strain LFI1238) (Vibrio salmonicida (strain LFI1238)), this protein is Proline--tRNA ligase.